The following is an 88-amino-acid chain: MTILSAITSISRPNKISKSVVSSNGGASLSLSSNSVACITACGGSSYSYSSSYQSSGSGFSYNSSYSSSVGYSSSVGIATGSCHSLCH.

It belongs to the hssA/B family.

The protein is HssA/B-like protein 61 (hssl61) of Dictyostelium discoideum (Social amoeba).